The chain runs to 459 residues: Transcriptional coactivator YAP1-A (459 aa).

Positions 1 to 13 (MEPGSQQQPSAPA) are enriched in low complexity. Positions 1 to 22 (MEPGSQQQPSAPAQQPPPVGHQ) are disordered. Serine 30, serine 80, serine 98, and serine 134 each carry phosphoserine; by LATS1 and LATS2. Disordered stretches follow at residues 65–99 (FKQP…AHSS) and 126–145 (SAPH…PLPP). 2 WW domains span residues 141 to 174 (VPLP…DPRK) and 199 to 232 (GPLP…DPRL). Residues 246-268 (NAPVKAPPALPPPSPQTGVLGSG) form a disordered region. A compositionally biased stretch (pro residues) spans 250–260 (KAPPALPPPSP). Positions 261-459 (QTGVLGSGGN…LDKESFLTWL (199 aa)) are transactivation domain. A coiled-coil region spans residues 269-297 (GNQQMRLQQLQMEKERLRLKHQELLRQVR). The interval 344–363 (GTYHSRDESTESGLSMSSYS) is disordered. Over residues 354–363 (ESGLSMSSYS) the composition is skewed to polar residues.

It belongs to the YAP1 family. In terms of assembly, interacts with tead1. Phosphorylated by lats1 and lats2; leading to cytoplasmic translocation and inactivation.

The protein localises to the cytoplasm. It localises to the nucleus. Its subcellular location is the cell junction. It is found in the tight junction. The protein resides in the cell membrane. Functionally, transcriptional regulator which can act both as a coactivator and a corepressor and is the critical downstream regulatory target in the Hippo signaling pathway that plays a pivotal role in organ size control and tumor suppression by restricting proliferation and promoting apoptosis. Plays a key role in tissue tension and 3D tissue shape by regulating cortical actomyosin network formation. Required for expansion of the neural plate and neural plate border zone progenitor pools. Acts as a direct regulator of pax3 expression via interaction with tead1. The chain is Transcriptional coactivator YAP1-A from Xenopus laevis (African clawed frog).